The chain runs to 188 residues: Elongation factor P (188 aa).

It belongs to the elongation factor P family.

Its subcellular location is the cytoplasm. It participates in protein biosynthesis; polypeptide chain elongation. Involved in peptide bond synthesis. Stimulates efficient translation and peptide-bond synthesis on native or reconstituted 70S ribosomes in vitro. Probably functions indirectly by altering the affinity of the ribosome for aminoacyl-tRNA, thus increasing their reactivity as acceptors for peptidyl transferase. The polypeptide is Elongation factor P (Rickettsia africae (strain ESF-5)).